The following is a 134-amino-acid chain: MLTAVLLSCALLLAMPPLQGAQMGPAPLEGIGRPEEALFLELQGLSLQPSLKRITEEQAEESLLQEAEAKALAEVLDPEGRKPRSPRRCVRLHESCLGHQVPCCDPCATCYCRFFNAFCYCRKLGTTTNPCSRT.

The signal sequence occupies residues 1–20 (MLTAVLLSCALLLAMPPLQG). Residues 21–84 (AQMGPAPLEG…VLDPEGRKPR (64 aa)) constitute a propeptide that is removed on maturation. 5 disulfide bridges follow: cysteine 89/cysteine 104, cysteine 96/cysteine 110, cysteine 103/cysteine 121, cysteine 107/cysteine 131, and cysteine 112/cysteine 119. An Agouti domain is found at 89–131 (CVRLHESCLGHQVPCCDPCATCYCRFFNAFCYCRKLGTTTNPC). Positions 113–115 (RFF) are interaction with melanocortin receptors.

Interacts with melanocortin receptors MC3R, MC4R and MC5R.

Its subcellular location is the secreted. It is found in the golgi apparatus lumen. Its function is as follows. Plays a role in weight homeostasis. Involved in the control of feeding behavior through the central melanocortin system. Acts as alpha melanocyte-stimulating hormone antagonist by inhibiting cAMP production mediated by stimulation of melanocortin receptors within the hypothalamus and adrenal gland. Has very low activity with MC5R. Is an inverse agonist for MC3R and MC4R being able to suppress their constitutive activity. It promotes MC3R and MC4R endocytosis in an arrestin-dependent manner. The protein is Agouti-related protein (AGRP) of Bos taurus (Bovine).